Reading from the N-terminus, the 530-residue chain is UDP-glucuronosyltransferase 1A8 (530 aa).

A signal peptide spans 1–25; it reads MAPSGCPPSLPLCVCLFLASGFAQA. Asn71, Asn292, and Asn430 each carry an N-linked (GlcNAc...) asparagine glycan. A helical membrane pass occupies residues 488–504; it reads VIGFLLAIVLTVVFIVY.

This sequence belongs to the UDP-glycosyltransferase family. In terms of assembly, homodimers. Homooligomer. Interacts with UGT1A1, UGT1A3, UGT1A4, UGT1A6, UGT1A7, UGT1A8, UGT1A9 and UGT1A10 to form heterodimers.

It localises to the endoplasmic reticulum membrane. The enzyme catalyses glucuronate acceptor + UDP-alpha-D-glucuronate = acceptor beta-D-glucuronoside + UDP + H(+). It catalyses the reaction 17beta-estradiol + UDP-alpha-D-glucuronate = 17beta-estradiol 3-O-(beta-D-glucuronate) + UDP + H(+). The catalysed reaction is 17alpha-estradiol + UDP-alpha-D-glucuronate = 17alpha-estradiol 3-O-(beta-D-glucuronate) + UDP + H(+). It carries out the reaction estrone + UDP-alpha-D-glucuronate = estrone 3-O-(beta-D-glucuronate) + UDP + H(+). The enzyme catalyses 16alpha,17alpha-estriol + UDP-alpha-D-glucuronate = 16alpha,17alpha-estriol 3-O-(beta-D-glucuronate) + UDP + H(+). It catalyses the reaction 2-hydroxy-17beta-estradiol + UDP-alpha-D-glucuronate = 2-hydroxy-17beta-estradiol 3-O-(beta-D-glucuronate) + UDP + H(+). The catalysed reaction is 2-hydroxy-17beta-estradiol + UDP-alpha-D-glucuronate = 17beta-estradiol 2-O-(beta-D-glucuronate) + UDP + H(+). It carries out the reaction 2-hydroxyestrone + UDP-alpha-D-glucuronate = 2-hydroxyestrone 3-O-(beta-D-glucuronate) + UDP + H(+). The enzyme catalyses 4-hydroxy-17beta-estradiol + UDP-alpha-D-glucuronate = 4-hydroxy-17beta-estradiol 3-O-(beta-D-glucuronate) + UDP + H(+). It catalyses the reaction 4-hydroxy-17beta-estradiol + UDP-alpha-D-glucuronate = 17beta-estradiol 4-O-(beta-D-glucuronate) + UDP + H(+). The catalysed reaction is 4-hydroxyestrone + UDP-alpha-D-glucuronate = 4-hydroxyestrone 3-O-(beta-D-glucuronate) + UDP + H(+). It carries out the reaction 4-hydroxyestrone + UDP-alpha-D-glucuronate = estrone 4-O-(beta-D-glucuronate) + UDP + H(+). The enzyme catalyses 2-methoxy-17beta-estradiol + UDP-alpha-D-glucuronate = 2-methoxy-17beta-estradiol 3-O-(beta-D-glucuronate) + UDP + H(+). It catalyses the reaction 2-methoxyestrone + UDP-alpha-D-glucuronate = 2-methoxyestrone 3-O-(beta-D-glucuronate) + UDP + H(+). The catalysed reaction is 4-methoxy-17beta-estradiol + UDP-alpha-D-glucuronate = 4-methoxy-17beta-estradiol 3-O-(beta-D-glucuronate) + UDP + H(+). It carries out the reaction 4-methoxyestrone + UDP-alpha-D-glucuronate = 4-methoxyestrone 3-O-(beta-D-glucuronate) + UDP + H(+). The enzyme catalyses 17beta-hydroxy-5alpha-androstan-3-one + UDP-alpha-D-glucuronate = 5alpha-dihydrotestosterone 17-O-(beta-D-glucuronate) + UDP + H(+). It catalyses the reaction 5alpha-dihydrotestosterone 17-O-(beta-D-glucuronate) + UDP-alpha-D-glucuronate = 5alpha-dihydrotestosterone 17-O-[beta-D-glucuronosyl-(1-&gt;2)-glucuronate] + UDP + H(+). The catalysed reaction is prunetin + UDP-alpha-D-glucuronate = prunetin-4'-O-beta-D-glucuronide + UDP. It carries out the reaction prunetin + UDP-alpha-D-glucuronate = prunetin-5-O-beta-D-glucuronide + UDP. The enzyme catalyses (E)-ferulate + UDP-alpha-D-glucuronate = (E)-4-O-(beta-D-glucuronosyl)-ferulate + UDP + H(+). It catalyses the reaction (E)-ferulate + UDP-alpha-D-glucuronate = (E)-ferulic acid beta-D-glucuronate ester + UDP. The catalysed reaction is candesartan + UDP-alpha-D-glucuronate = candesartan O-beta-D-glucuronoside + UDP. It carries out the reaction mycophenolate + UDP-alpha-D-glucuronate = mycophenolate 7-O-beta-D-glucuronide + UDP + H(+). Its function is as follows. UDP-glucuronosyltransferase (UGT) that catalyzes phase II biotransformation reactions in which lipophilic substrates are conjugated with glucuronic acid to increase the metabolite's water solubility, thereby facilitating excretion into either the urine or bile. Essential for the elimination and detoxification of drugs, xenobiotics and endogenous compounds. Catalyzes the glucuronidation of endogenous steroid hormones such as androgens and estrogens. Produces dihydrotestosterone (DHT) diglucuronide from the DHT after two subsequent glucoronidation steps. Involved in the glucuronidation of the phytochemical ferulic acid at the phenolic or the carboxylic acid group. Also catalyzes the glucuronidation of the isoflavones genistein, daidzein, glycitein, formononetin, biochanin A and prunetin, which are phytoestrogens with anticancer and cardiovascular properties. Involved in the glucuronidation of the AGTR1 angiotensin receptor antagonist caderastan, a drug which can inhibit the effect of angiotensin II. Also metabolizes mycophenolate, an immunosuppressive agent. This Rattus norvegicus (Rat) protein is UDP-glucuronosyltransferase 1A8.